The chain runs to 89 residues: Small ribosomal subunit protein uS14 (89 aa).

It belongs to the universal ribosomal protein uS14 family. Part of the 30S ribosomal subunit. Contacts proteins S3 and S10.

Functionally, binds 16S rRNA, required for the assembly of 30S particles and may also be responsible for determining the conformation of the 16S rRNA at the A site. The sequence is that of Small ribosomal subunit protein uS14 from Flavobacterium johnsoniae (strain ATCC 17061 / DSM 2064 / JCM 8514 / BCRC 14874 / CCUG 350202 / NBRC 14942 / NCIMB 11054 / UW101) (Cytophaga johnsonae).